Here is a 239-residue protein sequence, read N- to C-terminus: Carboxy-S-adenosyl-L-methionine synthase (239 aa).

S-adenosyl-L-methionine contacts are provided by residues Tyr35, 64–66, 88–89, and Arg195; these read GCS and DN.

The protein belongs to the class I-like SAM-binding methyltransferase superfamily. Cx-SAM synthase family. Homodimer.

It carries out the reaction prephenate + S-adenosyl-L-methionine = carboxy-S-adenosyl-L-methionine + 3-phenylpyruvate + H2O. Functionally, catalyzes the conversion of S-adenosyl-L-methionine (SAM) to carboxy-S-adenosyl-L-methionine (Cx-SAM). This is Carboxy-S-adenosyl-L-methionine synthase from Helicobacter pylori (strain HPAG1).